A 921-amino-acid chain; its full sequence is Protein translocase subunit SecA (921 aa).

ATP contacts are provided by residues Gln-86, 104 to 108, and Asp-497; that span reads GEGKT. Positions 829-838 are enriched in low complexity; the sequence is QQAPQQQPQQ. The segment at 829-921 is disordered; it reads QQAPQQQPQQ…CHGAIETQKA (93 aa). Pro residues predominate over residues 839-855; sequence VAPPPRPQPPQPAPQPP. Zn(2+) contacts are provided by Cys-901, Cys-903, Cys-912, and His-913.

The protein belongs to the SecA family. In terms of assembly, monomer and homodimer. Part of the essential Sec protein translocation apparatus which comprises SecA, SecYEG and auxiliary proteins SecDF-YajC and YidC. Zn(2+) is required as a cofactor.

It localises to the cell inner membrane. The protein resides in the cytoplasm. The catalysed reaction is ATP + H2O + cellular proteinSide 1 = ADP + phosphate + cellular proteinSide 2.. Its function is as follows. Part of the Sec protein translocase complex. Interacts with the SecYEG preprotein conducting channel. Has a central role in coupling the hydrolysis of ATP to the transfer of proteins into and across the cell membrane, serving both as a receptor for the preprotein-SecB complex and as an ATP-driven molecular motor driving the stepwise translocation of polypeptide chains across the membrane. The protein is Protein translocase subunit SecA of Hyphomonas neptunium (strain ATCC 15444).